A 629-amino-acid chain; its full sequence is Dual specificity tyrosine-phosphorylation-regulated kinase 1B (629 aa).

Tyr-63 bears the Phosphotyrosine mark. The tract at residues 67-86 is disordered; that stretch reads KKRRAQQAPPQDSSTKKEKK. The Bipartite nuclear localization signal signature appears at 69–86; the sequence is RRAQQAPPQDSSTKKEKK. Tyr-92 and Tyr-111 each carry phosphotyrosine. The Protein kinase domain maps to 111 to 431; that stretch reads YEIDSLIGKG…PLGALQHGFF (321 aa). Position 117–125 (117–125) interacts with ATP; that stretch reads IGKGSFGQV. Tyr-129 carries the post-translational modification Phosphotyrosine. Residue Lys-140 coordinates ATP. A Phosphotyrosine modification is found at Tyr-171. 190-193 provides a ligand contact to ATP; sequence FELL. Asp-239 acts as the Proton acceptor in catalysis. Ser-262 carries the phosphoserine modification. Tyr-271 bears the Phosphotyrosine; by autocatalysis mark. Tyr-273 carries the phosphotyrosine modification. The interval 380 to 399 is disordered; sequence GVQTGGPGGRRAGEPGHSPA. Residue Tyr-401 is modified to Phosphotyrosine. Disordered stretches follow at residues 436–480 and 496–629; these read DEAT…SNDN and PITD…AASS. The segment covering 438–477 has biased composition (low complexity); that stretch reads ATNTGPAGSSASTSPAPLDTCPSSSTASSISSSGGSSGSS. Residues 480–520 are interaction with RANBP9; it reads NRAYRYSNRYCGGPGPPITDCEMNSPQVLPSQPLRPWAGGD. 2 stretches are compositionally biased toward pro residues: residues 552-562 and 574-585; these read PPSPTSPPPPE and DCSPPPPAPAPQ. Residue Ser-624 is modified to Phosphoserine.

The protein belongs to the protein kinase superfamily. CMGC Ser/Thr protein kinase family. MNB/DYRK subfamily. Dimer. Interacts with DCOHM, MAP2K3/MKK3, RANBP9 and TCF1/HNF1A. Part of a complex consisting of RANBP9, RAN, DYRK1B and COPS5. Interacts with DCAF7. Interacts with RNF169. Phosphorylated by MAP kinase. Tyrosine phosphorylation may be required for dimerization. In terms of tissue distribution, isoform 1 and isoform 2 are broadly expressed. Isoform 3 seems specific for skeletal muscle (at protein level).

The protein localises to the nucleus. It localises to the nucleolus. It is found in the chromosome. The enzyme catalyses L-seryl-[protein] + ATP = O-phospho-L-seryl-[protein] + ADP + H(+). It catalyses the reaction L-threonyl-[protein] + ATP = O-phospho-L-threonyl-[protein] + ADP + H(+). The catalysed reaction is L-tyrosyl-[protein] + ATP = O-phospho-L-tyrosyl-[protein] + ADP + H(+). Inhibited by RANBP9. Functionally, dual-specificity kinase which possesses both serine/threonine and tyrosine kinase activities. Plays an essential role in ribosomal DNA (rDNA) double-strand break repair and rDNA copy number maintenance. During DNA damage, mediates transcription silencing in part via phosphorylating and enforcing DSB accumulation of the histone methyltransferase EHMT2. Enhances the transcriptional activity of TCF1/HNF1A and FOXO1. Inhibits epithelial cell migration. Mediates colon carcinoma cell survival in mitogen-poor environments. Inhibits the SHH and WNT1 pathways, thereby enhancing adipogenesis. In addition, promotes expression of the gluconeogenic enzyme glucose-6-phosphatase catalytic subunit 1 (G6PC1). The polypeptide is Dual specificity tyrosine-phosphorylation-regulated kinase 1B (Dyrk1b) (Mus musculus (Mouse)).